The primary structure comprises 426 residues: UDP-N-acetylglucosamine 1-carboxyvinyltransferase (426 aa).

A phosphoenolpyruvate-binding site is contributed by 22–23 (KN). Arginine 94 contacts UDP-N-acetyl-alpha-D-glucosamine. The active-site Proton donor is the cysteine 118. Position 118 is a 2-(S-cysteinyl)pyruvic acid O-phosphothioketal (cysteine 118). UDP-N-acetyl-alpha-D-glucosamine is bound by residues 123–127 (RPVDL), aspartate 309, and isoleucine 331.

This sequence belongs to the EPSP synthase family. MurA subfamily.

The protein localises to the cytoplasm. It carries out the reaction phosphoenolpyruvate + UDP-N-acetyl-alpha-D-glucosamine = UDP-N-acetyl-3-O-(1-carboxyvinyl)-alpha-D-glucosamine + phosphate. The protein operates within cell wall biogenesis; peptidoglycan biosynthesis. In terms of biological role, cell wall formation. Adds enolpyruvyl to UDP-N-acetylglucosamine. This is UDP-N-acetylglucosamine 1-carboxyvinyltransferase from Paracoccus denitrificans (strain Pd 1222).